We begin with the raw amino-acid sequence, 1486 residues long: Chromosome partition protein MukB (1486 aa).

Residue 34 to 41 (GGNGAGKS) coordinates ATP. Coiled coils occupy residues 326-418 (LEAD…QYNQ), 444-480 (LETF…QAYQ), and 509-603 (RHLA…RAPV). The tract at residues 666–783 (PGGSEDQRLN…EVPLFGRAAR (118 aa)) is flexible hinge. Coiled coils occupy residues 835 to 923 (EAEI…AKLE), 977 to 1115 (EMLS…TAKA), and 1209 to 1266 (VEAI…QNVS).

The protein belongs to the SMC family. MukB subfamily. In terms of assembly, homodimerization via its hinge domain. Binds to DNA via its C-terminal region. Interacts, and probably forms a ternary complex, with MukE and MukF via its C-terminal region. The complex formation is stimulated by calcium or magnesium. Interacts with tubulin-related protein FtsZ.

It localises to the cytoplasm. The protein resides in the nucleoid. In terms of biological role, plays a central role in chromosome condensation, segregation and cell cycle progression. Functions as a homodimer, which is essential for chromosome partition. Involved in negative DNA supercoiling in vivo, and by this means organize and compact chromosomes. May achieve or facilitate chromosome segregation by condensation DNA from both sides of a centrally located replisome during cell division. This chain is Chromosome partition protein MukB, found in Escherichia coli O6:H1 (strain CFT073 / ATCC 700928 / UPEC).